Consider the following 368-residue polypeptide: Agmatine deiminase (368 aa).

The Amidino-cysteine intermediate role is filled by Cys-357.

Belongs to the agmatine deiminase family. In terms of assembly, homodimer.

The enzyme catalyses agmatine + H2O = N-carbamoylputrescine + NH4(+). The protein operates within amine and polyamine biosynthesis; putrescine biosynthesis via agmatine pathway; N-carbamoylputrescine from agmatine: step 1/1. Functionally, mediates the hydrolysis of agmatine into N-carbamoylputrescine in the arginine decarboxylase (ADC) pathway of putrescine biosynthesis, a basic polyamine. The chain is Agmatine deiminase from Pseudomonas syringae pv. syringae (strain B728a).